The chain runs to 263 residues: Proliferating cell nuclear antigen (263 aa).

A DNA-binding region spans residues 61–80 (RCDRNLSMGMNLNNMAKMLR).

It belongs to the PCNA family. Homotrimer. Interacts with FEN1A. Interacts with POLL. Interacts with RAD/GEN1. Interacts with DJA7 and DJA8. In terms of tissue distribution, expressed in proliferating tissues. Expressed in roots and root apex. Expressed at low levels in young leaves. Not detected in mature leaves. Highly expressed in shoot apical meristem (SAM). Expressed in flag leaves and panicles.

The protein localises to the nucleus. In terms of biological role, this protein is an auxiliary protein of DNA polymerase delta and is involved in the control of eukaryotic DNA replication by increasing the polymerase's processibility during elongation of the leading strand. This Oryza sativa subsp. japonica (Rice) protein is Proliferating cell nuclear antigen.